An 851-amino-acid chain; its full sequence is DNA mismatch repair protein MutS (851 aa).

602–609 (GPNMSGKS) serves as a coordination point for ATP.

Belongs to the DNA mismatch repair MutS family.

Functionally, this protein is involved in the repair of mismatches in DNA. It is possible that it carries out the mismatch recognition step. This protein has a weak ATPase activity. This chain is DNA mismatch repair protein MutS, found in Streptococcus pyogenes serotype M2 (strain MGAS10270).